Here is a 138-residue protein sequence, read N- to C-terminus: Prefoldin subunit alpha (138 aa).

Belongs to the prefoldin subunit alpha family. Heterohexamer of two alpha and four beta subunits.

The protein resides in the cytoplasm. Functionally, molecular chaperone capable of stabilizing a range of proteins. Seems to fulfill an ATP-independent, HSP70-like function in archaeal de novo protein folding. The polypeptide is Prefoldin subunit alpha (Methanococcoides burtonii (strain DSM 6242 / NBRC 107633 / OCM 468 / ACE-M)).